Consider the following 315-residue polypeptide: Aspartate carbamoyltransferase catalytic subunit (315 aa).

Carbamoyl phosphate-binding residues include Arg-64 and Thr-65. An L-aspartate-binding site is contributed by Lys-92. Carbamoyl phosphate is bound by residues Arg-114, His-142, and Gln-145. L-aspartate-binding residues include Arg-175 and Arg-229. Carbamoyl phosphate contacts are provided by Gly-270 and Pro-271.

Belongs to the aspartate/ornithine carbamoyltransferase superfamily. ATCase family. In terms of assembly, heterododecamer (2C3:3R2) of six catalytic PyrB chains organized as two trimers (C3), and six regulatory PyrI chains organized as three dimers (R2).

It carries out the reaction carbamoyl phosphate + L-aspartate = N-carbamoyl-L-aspartate + phosphate + H(+). It participates in pyrimidine metabolism; UMP biosynthesis via de novo pathway; (S)-dihydroorotate from bicarbonate: step 2/3. Catalyzes the condensation of carbamoyl phosphate and aspartate to form carbamoyl aspartate and inorganic phosphate, the committed step in the de novo pyrimidine nucleotide biosynthesis pathway. This chain is Aspartate carbamoyltransferase catalytic subunit, found in Methylorubrum populi (strain ATCC BAA-705 / NCIMB 13946 / BJ001) (Methylobacterium populi).